Here is a 121-residue protein sequence, read N- to C-terminus: Small ribosomal subunit protein uS13 (121 aa).

The segment at 94-121 (GLPVRGQRTRTNARTRKGKRKTVAGKKK) is disordered.

The protein belongs to the universal ribosomal protein uS13 family. In terms of assembly, part of the 30S ribosomal subunit. Forms a loose heterodimer with protein S19. Forms two bridges to the 50S subunit in the 70S ribosome.

Its function is as follows. Located at the top of the head of the 30S subunit, it contacts several helices of the 16S rRNA. In the 70S ribosome it contacts the 23S rRNA (bridge B1a) and protein L5 of the 50S subunit (bridge B1b), connecting the 2 subunits; these bridges are implicated in subunit movement. Contacts the tRNAs in the A and P-sites. The sequence is that of Small ribosomal subunit protein uS13 from Treponema pallidum (strain Nichols).